Reading from the N-terminus, the 402-residue chain is Bisdemethoxycurcumin synthase (402 aa).

C174 (acyl-thioester intermediate) is an active-site residue.

It belongs to the thiolase-like superfamily. Chalcone/stilbene synthases family. In terms of assembly, homodimer.

It carries out the reaction 2 4-coumaroyl-CoA + malonyl-CoA + H2O + H(+) = bisdemethoxycurcumin + 2 CO2 + 3 CoA. It functions in the pathway secondary metabolite biosynthesis; flavonoid biosynthesis. Functionally, plant-specific type III polyketide synthase (PKS) that catalyzes the one-pot formation of the C6-C7-C6 diarylheptanoid scaffold of bisdemethoxycurcumin by the condensation of two molecules of 4-coumaroyl-CoA and one molecule of malonyl-CoA. The sequence is that of Bisdemethoxycurcumin synthase from Oryza sativa subsp. japonica (Rice).